The sequence spans 262 residues: tRNA pseudouridine synthase A 2 (262 aa).

Aspartate 66 serves as the catalytic Nucleophile. Tyrosine 125 is a substrate binding site.

It belongs to the tRNA pseudouridine synthase TruA family. In terms of assembly, homodimer.

The catalysed reaction is uridine(38/39/40) in tRNA = pseudouridine(38/39/40) in tRNA. Functionally, formation of pseudouridine at positions 38, 39 and 40 in the anticodon stem and loop of transfer RNAs. The polypeptide is tRNA pseudouridine synthase A 2 (Protochlamydia amoebophila (strain UWE25)).